A 211-amino-acid polypeptide reads, in one-letter code: 1-deoxy-D-xylulose 5-phosphate reductoisomerase (211 aa).

Residue Asp14 participates in Mn(2+) binding. The 1-deoxy-D-xylulose 5-phosphate site is built by Ser15, Glu16, Ser40, His63, Ser76, Asn81, Lys82, and Glu85. Glu16 contributes to the Mn(2+) binding site. Glu85 contributes to the Mn(2+) binding site.

The protein belongs to the DXR family. Mn(2+) serves as cofactor. Mg(2+) is required as a cofactor. In terms of tissue distribution, mostly expressed in flowers and, to a lower extent, in leaves.

Its subcellular location is the plastid. It localises to the chloroplast stroma. It catalyses the reaction 2-C-methyl-D-erythritol 4-phosphate + NADP(+) = 1-deoxy-D-xylulose 5-phosphate + NADPH + H(+). It functions in the pathway isoprenoid biosynthesis; isopentenyl diphosphate biosynthesis via DXP pathway; isopentenyl diphosphate from 1-deoxy-D-xylulose 5-phosphate: step 1/6. Its function is as follows. Enzyme of the plastid non-mevalonate pathway for isoprenoid biosynthesis that catalyzes the NADPH-dependent rearrangement and reduction of 1-deoxy-D-xylulose-5-phosphate (DXP) to 2-C-methyl-D-erythritol 4-phosphate (MEP). Required for chloroplast development. In Thymus vulgaris (Thyme), this protein is 1-deoxy-D-xylulose 5-phosphate reductoisomerase.